A 342-amino-acid chain; its full sequence is Mitochondrial sorting homolog (342 aa).

The Mitochondrial intermembrane portion of the chain corresponds to 1–6 (MTDRNE). Residues 7 to 25 (LIGVAIRVVAAAAVSFLSV) form a helical membrane-spanning segment. Residues 26-342 (RYLVKYLDPN…AHLLVEETLD (317 aa)) lie on the Cytoplasmic side of the membrane. Residue 124 to 131 (GPPGCGKT) coordinates ATP.

The protein belongs to the AAA ATPase family.

It is found in the mitochondrion outer membrane. In terms of biological role, involved in intramitochondrial sorting of proteins. This chain is Mitochondrial sorting homolog (mspn-1), found in Caenorhabditis elegans.